A 494-amino-acid chain; its full sequence is MPPSTDSSRRNSEEGFSDGFKLDSSALNKPPEEVFDIVGKLGEGSYGSVHKAIHKESGHVLAIKKVPVDTDLQEIIKEISIMQQCKSKYVVKYYGSYFKNSDLWIVMEYCGAGSISDIMRARRKPLSEKEISAVLRDTLKGLQYLHDLKKIHRDIKAGNILLNTDGIAKLADFGVAGQLTDTMAKRNTVIGTPFWMAPEVIEEIGYDTKADIWSLGITAIEMAEGRPPYSDIHPMRAIFMIPTKPPPTFKKPEEWSSEFNDFIRCCLIKKPEERKTALRLCEHTFIENAPGCDVLQAMILDAQEKVLLGQAPVAVAGADATLLSEGMSTMIDGGDATLVQYKDNYVTAQSLRSQMESLKIGGEIPKSAYGSSRNNGSPRVQPPGHTASACDPSNNPPFAEEGTGPNFQIGTSESSYKDASYNMMNTEAEYENRFQRAVCDGDFEFLRNITLDELIRRKESLDSEMEEEIRELQRRYKTKRQPILDVIEIKKRLN.

The interval 1–27 (MPPSTDSSRRNSEEGFSDGFKLDSSAL) is disordered. The Protein kinase domain maps to 35-286 (FDIVGKLGEG…ALRLCEHTFI (252 aa)). Residues 41 to 49 (LGEGSYGSV) and Lys64 each bind ATP. Catalysis depends on Asp154, which acts as the Proton acceptor. Residues 364-413 (IPKSAYGSSRNNGSPRVQPPGHTASACDPSNNPPFAEEGTGPNFQIGTSE) form a disordered region. Residues 369–378 (YGSSRNNGSP) are compositionally biased toward polar residues. Residues 443 to 490 (FEFLRNITLDELIRRKESLDSEMEEEIRELQRRYKTKRQPILDVIEIK) form the SARAH domain.

This sequence belongs to the protein kinase superfamily. STE Ser/Thr protein kinase family. STE20 subfamily. Requires Mg(2+) as cofactor. Post-translationally, proteolytically cleaved by caspase-3 during apoptosis which results in kinase activation.

The enzyme catalyses L-seryl-[protein] + ATP = O-phospho-L-seryl-[protein] + ADP + H(+). The catalysed reaction is L-threonyl-[protein] + ATP = O-phospho-L-threonyl-[protein] + ADP + H(+). In terms of biological role, serine/threonine-protein kinase which extends lifespan and delays tissue aging, probably by activating daf-16. The sequence is that of Serine/threonine-protein kinase cst-1 (cst-1) from Caenorhabditis briggsae.